A 185-amino-acid chain; its full sequence is Thioredoxin F2, chloroplastic (185 aa).

The Thioredoxin domain maps to 59–184; sequence RRIGSCVVRC…LLAAIEAARS (126 aa). Residues Cys109 and Cys112 each act as nucleophile in the active site. Cys109 and Cys112 form a disulfide bridge. Cys136 is subject to S-glutathionyl cysteine; transient.

The protein belongs to the thioredoxin family. Plant F-type subfamily. Post-translationally, glutathionylation at Cys-136 decreases its ability to be reduced by ferredoxin-thioredoxin reductase and reduces its efficiency in activating target chloroplastic enzymes.

It is found in the plastid. It localises to the chloroplast stroma. Probable thiol-disulfide oxidoreductase involved in the redox regulation of enzymes of both reductive pentose phosphate pathway (Calvin-Benson cycle) and oxidative pentose phosphate pathway. This Arabidopsis thaliana (Mouse-ear cress) protein is Thioredoxin F2, chloroplastic.